We begin with the raw amino-acid sequence, 466 residues long: Ribulose bisphosphate carboxylase large chain (466 aa).

An N6,N6,N6-trimethyllysine modification is found at Lys-4. Residues Asn-113 and Thr-163 each coordinate substrate. The Proton acceptor role is filled by Lys-165. Position 167 (Lys-167) interacts with substrate. Mg(2+) contacts are provided by Lys-191, Asp-193, and Glu-194. Lys-191 is modified (N6-carboxylysine). His-284 serves as the catalytic Proton acceptor. Residues Arg-285, His-317, and Ser-369 each contribute to the substrate site.

The protein belongs to the RuBisCO large chain family. Type I subfamily. In terms of assembly, heterohexadecamer of 8 large chains and 8 small chains; disulfide-linked. The disulfide link is formed within the large subunit homodimers. Mg(2+) serves as cofactor. The disulfide bond which can form in the large chain dimeric partners within the hexadecamer appears to be associated with oxidative stress and protein turnover.

Its subcellular location is the plastid. It localises to the chloroplast. The enzyme catalyses 2 (2R)-3-phosphoglycerate + 2 H(+) = D-ribulose 1,5-bisphosphate + CO2 + H2O. It catalyses the reaction D-ribulose 1,5-bisphosphate + O2 = 2-phosphoglycolate + (2R)-3-phosphoglycerate + 2 H(+). In terms of biological role, ruBisCO catalyzes two reactions: the carboxylation of D-ribulose 1,5-bisphosphate, the primary event in carbon dioxide fixation, as well as the oxidative fragmentation of the pentose substrate in the photorespiration process. Both reactions occur simultaneously and in competition at the same active site. This is Ribulose bisphosphate carboxylase large chain from Ruttya fruticosa (African azalea).